We begin with the raw amino-acid sequence, 317 residues long: tRNA-cytidine(32) 2-sulfurtransferase (317 aa).

Positions 1-29 are disordered; that stretch reads MNTANNTLPTAADWAGEDGAPDAADTRKI. A PP-loop motif motif is present at residues 65–70; that stretch reads SGGKDS. [4Fe-4S] cluster contacts are provided by C140, C143, and C231.

It belongs to the TtcA family. Homodimer. Mg(2+) serves as cofactor. Requires [4Fe-4S] cluster as cofactor.

It localises to the cytoplasm. The catalysed reaction is cytidine(32) in tRNA + S-sulfanyl-L-cysteinyl-[cysteine desulfurase] + AH2 + ATP = 2-thiocytidine(32) in tRNA + L-cysteinyl-[cysteine desulfurase] + A + AMP + diphosphate + H(+). The protein operates within tRNA modification. In terms of biological role, catalyzes the ATP-dependent 2-thiolation of cytidine in position 32 of tRNA, to form 2-thiocytidine (s(2)C32). The sulfur atoms are provided by the cysteine/cysteine desulfurase (IscS) system. The polypeptide is tRNA-cytidine(32) 2-sulfurtransferase (Acidovorax ebreus (strain TPSY) (Diaphorobacter sp. (strain TPSY))).